The sequence spans 355 residues: Peptide chain release factor 1 (355 aa).

The residue at position 231 (Q231) is an N5-methylglutamine. Residues 280 to 293 (KERKAKEQSERKDQ) show a composition bias toward basic and acidic residues. Residues 280–307 (KERKAKEQSERKDQVGTGDRSGRIRTYN) form a disordered region.

This sequence belongs to the prokaryotic/mitochondrial release factor family. In terms of processing, methylated by PrmC. Methylation increases the termination efficiency of RF1.

Its subcellular location is the cytoplasm. Its function is as follows. Peptide chain release factor 1 directs the termination of translation in response to the peptide chain termination codons UAG and UAA. The protein is Peptide chain release factor 1 of Campylobacter hominis (strain ATCC BAA-381 / DSM 21671 / CCUG 45161 / LMG 19568 / NCTC 13146 / CH001A).